The following is a 706-amino-acid chain: Elongation factor G (706 aa).

The 290-residue stretch at 8-297 (SYVRNIGIGA…AVVDYLPSPN (290 aa)) folds into the tr-type G domain. GTP-binding positions include 17-24 (AHIDAGKT), 95-99 (DTPGH), and 149-152 (NKMD).

The protein belongs to the TRAFAC class translation factor GTPase superfamily. Classic translation factor GTPase family. EF-G/EF-2 subfamily.

The protein resides in the cytoplasm. Functionally, catalyzes the GTP-dependent ribosomal translocation step during translation elongation. During this step, the ribosome changes from the pre-translocational (PRE) to the post-translocational (POST) state as the newly formed A-site-bound peptidyl-tRNA and P-site-bound deacylated tRNA move to the P and E sites, respectively. Catalyzes the coordinated movement of the two tRNA molecules, the mRNA and conformational changes in the ribosome. The chain is Elongation factor G from Orientia tsutsugamushi (strain Ikeda) (Rickettsia tsutsugamushi).